The following is a 243-amino-acid chain: UPF0246 protein Spy49_1742 (243 aa).

This sequence belongs to the UPF0246 family.

The protein is UPF0246 protein Spy49_1742 of Streptococcus pyogenes serotype M49 (strain NZ131).